The following is a 285-amino-acid chain: Homeobox protein vex1 (285 aa).

2 disordered regions span residues 30–54 (KSGN…LPSV) and 69–88 (NEER…APQE). The segment covering 69 to 80 (NEERSPPVKDQL) has biased composition (basic and acidic residues). Positions 131–190 (AARARTKFSPEQLEELERSFKENRYIGSSEKRRLSKVLKLSETQIKTWFQNRRMKFKRQT) form a DNA-binding region, homeobox.

As to expression, widely expressed in the embryo prior to gastrulation. Becomes restricted to the ventral marginal zone by mid/late gastrulation. Ventral localization persists during gastrulation and neurulation in the ventral region of the closed blastopore and in the proctodeum during tail bud stages.

The protein localises to the nucleus. In terms of biological role, transcriptional repressor. Acts in a ventral signaling pathway downstream of bmp4 to antagonize the Spemann organizer and ventrally pattern the embryonic mesoderm. Represses transcription of the dorsal genes gsc and otx2. This Xenopus laevis (African clawed frog) protein is Homeobox protein vex1.